The sequence spans 249 residues: 5'-nucleotidase SurE (249 aa).

A divalent metal cation-binding residues include aspartate 8, aspartate 9, serine 39, and asparagine 91.

This sequence belongs to the SurE nucleotidase family. A divalent metal cation serves as cofactor.

The protein localises to the cytoplasm. The enzyme catalyses a ribonucleoside 5'-phosphate + H2O = a ribonucleoside + phosphate. Its function is as follows. Nucleotidase that shows phosphatase activity on nucleoside 5'-monophosphates. In Pseudomonas fluorescens (strain Pf0-1), this protein is 5'-nucleotidase SurE.